The following is a 521-amino-acid chain: Cytochrome P450 1A1 (521 aa).

Residue Phe229 coordinates substrate. Residue Cys463 coordinates heme.

This sequence belongs to the cytochrome P450 family. It depends on heme as a cofactor.

Its subcellular location is the endoplasmic reticulum membrane. It localises to the microsome membrane. It carries out the reaction an organic molecule + reduced [NADPH--hemoprotein reductase] + O2 = an alcohol + oxidized [NADPH--hemoprotein reductase] + H2O + H(+). Cytochromes P450 are a group of heme-thiolate monooxygenases. They oxidize a variety of structurally unrelated compounds, including steroids, fatty acids, and xenobiotics. In Chelon auratus (Golden grey mullet), this protein is Cytochrome P450 1A1 (cyp1a1).